Consider the following 104-residue polypeptide: Protein U9 (104 aa).

The chain crosses the membrane as a helical span at residues 37-54; that stretch reads GVQGLNADCSYVKSQCIK.

Its subcellular location is the host membrane. This Human herpesvirus 6B (HHV-6 variant B) protein is Protein U9 (U9).